Here is a 228-residue protein sequence, read N- to C-terminus: MSTWANLGLQDSASPLMEQLIFFHDHALLILVMITVLVGYLMFMLFFNNYVNRFLLHGQLIEMIWTILPAIILLFIALPSLRLLYLLDEINEPSVTLKSIGHQWYWSYEYSDFNNIEFDSYMIPTNELTTDGFRLLDVDNRVILPMNSQIRILVTAADVIHSWTVPALGVKVDGTPGRLNQTNFFINRPGLFYGQCSEICGANHSFMPIVIESVPVNHFIKWISSNNS.

Over 1–26 the chain is Mitochondrial intermembrane; that stretch reads MSTWANLGLQDSASPLMEQLIFFHDH. Residues 27-48 form a helical membrane-spanning segment; the sequence is ALLILVMITVLVGYLMFMLFFN. At 49–62 the chain is on the mitochondrial matrix side; sequence NYVNRFLLHGQLIE. Residues 63–82 traverse the membrane as a helical segment; that stretch reads MIWTILPAIILLFIALPSLR. Topologically, residues 83–228 are mitochondrial intermembrane; that stretch reads LLYLLDEINE…FIKWISSNNS (146 aa). Positions 161, 196, 198, 200, 204, and 207 each coordinate Cu cation. E198 contacts Mg(2+).

This sequence belongs to the cytochrome c oxidase subunit 2 family. In terms of assembly, component of the cytochrome c oxidase (complex IV, CIV), a multisubunit enzyme composed of a catalytic core of 3 subunits and several supernumerary subunits. The complex exists as a monomer or a dimer and forms supercomplexes (SCs) in the inner mitochondrial membrane with ubiquinol-cytochrome c oxidoreductase (cytochrome b-c1 complex, complex III, CIII). Cu cation is required as a cofactor.

It localises to the mitochondrion inner membrane. It carries out the reaction 4 Fe(II)-[cytochrome c] + O2 + 8 H(+)(in) = 4 Fe(III)-[cytochrome c] + 2 H2O + 4 H(+)(out). Its function is as follows. Component of the cytochrome c oxidase, the last enzyme in the mitochondrial electron transport chain which drives oxidative phosphorylation. The respiratory chain contains 3 multisubunit complexes succinate dehydrogenase (complex II, CII), ubiquinol-cytochrome c oxidoreductase (cytochrome b-c1 complex, complex III, CIII) and cytochrome c oxidase (complex IV, CIV), that cooperate to transfer electrons derived from NADH and succinate to molecular oxygen, creating an electrochemical gradient over the inner membrane that drives transmembrane transport and the ATP synthase. Cytochrome c oxidase is the component of the respiratory chain that catalyzes the reduction of oxygen to water. Electrons originating from reduced cytochrome c in the intermembrane space (IMS) are transferred via the dinuclear copper A center (CU(A)) of subunit 2 and heme A of subunit 1 to the active site in subunit 1, a binuclear center (BNC) formed by heme A3 and copper B (CU(B)). The BNC reduces molecular oxygen to 2 water molecules using 4 electrons from cytochrome c in the IMS and 4 protons from the mitochondrial matrix. This chain is Cytochrome c oxidase subunit 2 (mt:CoII), found in Drosophila simulans (Fruit fly).